The sequence spans 91 residues: Small ribosomal subunit protein bS18 (91 aa).

The protein belongs to the bacterial ribosomal protein bS18 family. In terms of assembly, part of the 30S ribosomal subunit. Forms a tight heterodimer with protein bS6.

Functionally, binds as a heterodimer with protein bS6 to the central domain of the 16S rRNA, where it helps stabilize the platform of the 30S subunit. This Paraburkholderia phymatum (strain DSM 17167 / CIP 108236 / LMG 21445 / STM815) (Burkholderia phymatum) protein is Small ribosomal subunit protein bS18.